A 301-amino-acid polypeptide reads, in one-letter code: uncharacterized protein (301 aa).

Transmembrane regions (helical) follow at residues 1–21 (MSWI…LGIV), 33–53 (SVLF…YFYY), 72–92 (AMSL…KIPG), 101–121 (FGII…TILI), 124–144 (FAWL…KTFY), 185–205 (YFTP…VFAI), 220–240 (IIYT…FCLA), 246–266 (FSYI…KIFI), and 270–290 (IAIP…FGII).

Belongs to the TerC family.

The protein localises to the cell membrane. This is an uncharacterized protein from Rickettsia felis (strain ATCC VR-1525 / URRWXCal2) (Rickettsia azadi).